Here is a 911-residue protein sequence, read N- to C-terminus: MVSLLKKLIGSRNDRLLKEYRKQVAQINSLEPKISALSDEELSAKTQEFRDRHQQGTSLDDLLPEAFAVVREAGKRVFGMRHFDVQMLGGIALHNGKIAEMRTGEGKTLMATLPVYLNAIAGKGVHVVTVNDYLARRDAEWMGRLYRFLGMSTGVVVPQQPNDEKIAAYAADITYGTNNEFGFDYLRDNMEYRVEDRRQRRLFYAIVDEVDSILIDEARTPLIISGQAEDHTELYVRMNAVPPLLKRMASEPKPHEPEPEGDYWVDEKSQQVYMSEAGHESAEKILTRVGLLPEGESLYDPRHIALMHHMMVALRAHTLFFRDQQYVVQDDEVVIVDEFTGRLMVGRRWSDGLHQAVEAKEGVKIQHENQTLASITFQNYFRMYDKLSGMTGTADTEAYEFQEIYTLETVIIPTNKPMVRKDQNDQVFKTTQEKYQAILNDIRDCHERGQPVLVGTTSIENSELLAGLLRQAKLPHEVLNAKQHAREAEIVAEAGKPGHITIATNMAGRGTDIVLGGSVDKQVDLIHANEALSEAEKEARIETLRAEWKPLNERVKQAGGLRIIGTERHESRRIDNQLRGRAGRQGDPGSSRFYLSLEDPLMRIFAGDRVRAIMERLKLPEGEPIEAGMVTRSIETAQRKVEGRNFDIRKQLLEYDDVANDQRKVLYSQRNEVLEAASIGATVEGLRDAAVAEMFRGFIPEESVEEQWDVAGLEKALAGDWHIQLPLTDMLEQEPNLTDEELLERVVAAARQIYTAKVEQVGAESWAQFERSIMLQSIDTHWREHLSALDYLRQGIHLRGYAQKNPKQEYKREAFELFSGMLDRIRDDVVRVLMTVRVQSAEQVEQAEADAAQPHVQNVQYHHSDYDEALADDGQPQGAQPVRNVLPKVGRNEPCPCGSGKKYKHCHGQLA.

Residues Gln-86, 104 to 108 (GEGKT), and Asp-512 contribute to the ATP site. Residues Cys-895, Cys-897, Cys-906, and His-907 each contribute to the Zn(2+) site.

The protein belongs to the SecA family. In terms of assembly, monomer and homodimer. Part of the essential Sec protein translocation apparatus which comprises SecA, SecYEG and auxiliary proteins SecDF-YajC and YidC. It depends on Zn(2+) as a cofactor.

It localises to the cell inner membrane. It is found in the cytoplasm. It catalyses the reaction ATP + H2O + cellular proteinSide 1 = ADP + phosphate + cellular proteinSide 2.. Functionally, part of the Sec protein translocase complex. Interacts with the SecYEG preprotein conducting channel. Has a central role in coupling the hydrolysis of ATP to the transfer of proteins into and across the cell membrane, serving both as a receptor for the preprotein-SecB complex and as an ATP-driven molecular motor driving the stepwise translocation of polypeptide chains across the membrane. This Bordetella bronchiseptica (strain ATCC BAA-588 / NCTC 13252 / RB50) (Alcaligenes bronchisepticus) protein is Protein translocase subunit SecA.